Consider the following 336-residue polypeptide: Dihydroorotate dehydrogenase (quinone) (336 aa).

FMN contacts are provided by residues 62–66 (AGLDK) and Thr86. Residue Lys66 participates in substrate binding. 111–115 (NRMGF) provides a ligand contact to substrate. FMN is bound by residues Asn139 and Asn172. Position 172 (Asn172) interacts with substrate. The active-site Nucleophile is Ser175. Asn177 lines the substrate pocket. The FMN site is built by Lys217 and Thr245. A substrate-binding site is contributed by 246 to 247 (NT). Residues Gly268, Gly297, and 318 to 319 (YS) contribute to the FMN site.

The protein belongs to the dihydroorotate dehydrogenase family. Type 2 subfamily. Monomer. FMN serves as cofactor.

It localises to the cell membrane. It carries out the reaction (S)-dihydroorotate + a quinone = orotate + a quinol. It functions in the pathway pyrimidine metabolism; UMP biosynthesis via de novo pathway; orotate from (S)-dihydroorotate (quinone route): step 1/1. Functionally, catalyzes the conversion of dihydroorotate to orotate with quinone as electron acceptor. This is Dihydroorotate dehydrogenase (quinone) from Aliivibrio fischeri (strain ATCC 700601 / ES114) (Vibrio fischeri).